Here is a 512-residue protein sequence, read N- to C-terminus: NAD-dependent deacetylase sir2A (512 aa).

The UBP-type zinc finger occupies isoleucine 7–asparagine 110. Zn(2+)-binding residues include cysteine 9, histidine 11, cysteine 34, cysteine 37, cysteine 46, cysteine 49, cysteine 54, histidine 61, histidine 65, histidine 71, cysteine 84, and cysteine 87. Residues aspartate 113–lysine 122 are compositionally biased toward basic and acidic residues. Residues aspartate 113 to serine 196 form a disordered region. The segment covering valine 130–asparagine 175 has biased composition (low complexity). A compositionally biased stretch (acidic residues) spans asparagine 176–glutamate 195. The 273-residue stretch at cysteine 231–glutamate 503 folds into the Deacetylase sirtuin-type domain. Residue histidine 361 is the Proton acceptor of the active site. Residues cysteine 369, cysteine 372, cysteine 393, and cysteine 399 each coordinate Zn(2+).

The protein belongs to the sirtuin family. Zn(2+) is required as a cofactor.

The catalysed reaction is N(6)-acetyl-L-lysyl-[protein] + NAD(+) + H2O = 2''-O-acetyl-ADP-D-ribose + nicotinamide + L-lysyl-[protein]. Its function is as follows. NAD-dependent deacetylase, which plays an important role in the regulation of transcriptional repression. The protein is NAD-dependent deacetylase sir2A (sir2A) of Dictyostelium discoideum (Social amoeba).